The following is a 210-amino-acid chain: Thymidylate kinase (210 aa).

10–17 contributes to the ATP binding site; that stretch reads GPDGAGKT.

It belongs to the thymidylate kinase family.

The enzyme catalyses dTMP + ATP = dTDP + ADP. Functionally, phosphorylation of dTMP to form dTDP in both de novo and salvage pathways of dTTP synthesis. The chain is Thymidylate kinase from Geobacillus sp. (strain WCH70).